A 458-amino-acid polypeptide reads, in one-letter code: DNA repair protein RadA (458 aa).

The segment at Cys-11–Cys-28 adopts a C4-type zinc-finger fold. Gly-100–Ser-107 serves as a coordination point for ATP. The RadA KNRFG motif motif lies at Lys-256–Gly-260. A lon-protease-like region spans residues Asp-355–Leu-458.

Belongs to the RecA family. RadA subfamily.

Its function is as follows. DNA-dependent ATPase involved in processing of recombination intermediates, plays a role in repairing DNA breaks. Stimulates the branch migration of RecA-mediated strand transfer reactions, allowing the 3' invading strand to extend heteroduplex DNA faster. Binds ssDNA in the presence of ADP but not other nucleotides, has ATPase activity that is stimulated by ssDNA and various branched DNA structures, but inhibited by SSB. Does not have RecA's homology-searching function. This chain is DNA repair protein RadA, found in Haemophilus influenzae (strain ATCC 51907 / DSM 11121 / KW20 / Rd).